A 346-amino-acid polypeptide reads, in one-letter code: Phosphate acyltransferase (346 aa).

It belongs to the PlsX family. As to quaternary structure, homodimer. Probably interacts with PlsY.

It is found in the cytoplasm. It catalyses the reaction a fatty acyl-[ACP] + phosphate = an acyl phosphate + holo-[ACP]. The protein operates within lipid metabolism; phospholipid metabolism. In terms of biological role, catalyzes the reversible formation of acyl-phosphate (acyl-PO(4)) from acyl-[acyl-carrier-protein] (acyl-ACP). This enzyme utilizes acyl-ACP as fatty acyl donor, but not acyl-CoA. The polypeptide is Phosphate acyltransferase (Crocosphaera subtropica (strain ATCC 51142 / BH68) (Cyanothece sp. (strain ATCC 51142))).